The following is a 1256-amino-acid chain: Pullulanase A (1256 aa).

The first 44 residues, 1–44 (MRKTPSHTEKKMVYSIRSLKNGTGSVLIGASLVLLAMATPTISS), serve as a signal peptide directing secretion. The segment at 42 to 117 (ISSDESTPTT…VTTETKAEEP (76 aa)) is disordered. Over residues 48-61 (TPTTNEPNNRNTTT) the composition is skewed to low complexity. Residues 79–90 (DISSPRNANASL) are compositionally biased toward polar residues. Residues 99-111 (TEPTTSTSPVTTE) show a composition bias toward low complexity. Residues 141–143 (WTW), Trp-153, Asp-199, 248–250 (WYW), Trp-261, Lys-303, and Asn-308 contribute to the substrate site. Residues Ser-646 and Tyr-648 each coordinate Ca(2+). Substrate contacts are provided by residues 652–653 (YD) and Phe-728. Asp-763 acts as the Nucleophile in catalysis. The Proton donor role is filled by Glu-792. Trp-794 lines the substrate pocket. Positions 813, 816, and 817 each coordinate Ca(2+). 3 residues coordinate substrate: Asp-824, Arg-827, and Tyr-834. The Ca(2+) site is built by Asp-867 and Asp-871. Residues Asn-881, Lys-954, and 974–976 (DSY) contribute to the substrate site. Asp-977 is a binding site for Ca(2+). The disordered stretch occupies residues 1126–1224 (SQNGTSHEST…TPDRQAELPN (99 aa)). The span at 1134–1172 (STAEEKPDSTPSKPEHQDPAPEARPDSTKPDAKVADAEN) shows a compositional bias: basic and acidic residues. A compositionally biased stretch (low complexity) spans 1181 to 1194 (SQAEQPAQEAQASS). Residues 1200–1210 (QNESVENSSKK) are compositionally biased toward polar residues. The short motif at 1222–1226 (LPNTG) is the LPXTG sorting signal element. At Thr-1225 the chain carries Pentaglycyl murein peptidoglycan amidated threonine. Residues 1226-1256 (GIKNENKLLFAGISLLALLGLGFLLKNKKEN) constitute a propeptide, removed by sortase.

The protein belongs to the glycosyl hydrolase 13 family.

The protein localises to the secreted. Its subcellular location is the cell wall. It localises to the cell surface. It catalyses the reaction Hydrolysis of (1-&gt;6)-alpha-D-glucosidic linkages in pullulan, amylopectin and glycogen, and in the alpha- and beta-limit dextrins of amylopectin and glycogen.. Its activity is regulated as follows. Inhibited by 4-O-alpha-D-glucopyranosylmoranoline (G1M). Virulence factor. Involved in the degradation of glycogen of the mammalian host cells. Hydrolyzes the alpha-1,6-branchpoints of glycogen. Hydrolyzes pullulan. Does not hydrolyze dextran. Binds to mouse lung alveolar type II cells that are rich in glycogen stores. Is an alpha-glucan-specific carbohydrate-binding protein, which binds to amylose (pure alpha-(1,4)-linked glucose), amylopectin (alpha-(1,4)-linked glucose with alpha-(1,6) branch points), pullulan (linear polymer of mixed alpha-(1,4)- and alpha-(1,6)-linked glucose) and glycogen (similar to amylopectin with more frequent alpha-(1,6) branch points) in vitro. Does not bind to dextran (a linear polymer of alpha-(1,6)-linked glucose). In Streptococcus pneumoniae serotype 2 (strain D39 / NCTC 7466), this protein is Pullulanase A.